Here is a 162-residue protein sequence, read N- to C-terminus: MGFVELNLTGIIQLLNFLILLFVLYKFLYKPFLQIADKRREKIQSDLASAEKELKEAQEMKKQAHDALESARKSADGIISEARQKSEEIINQAKVKAREEAEKVLNSARNEIEREKKQALQEIEKRAGEIAVTLALKILQGVLDEKAKREYLINILNKEKEK.

Residues 8–28 (LTGIIQLLNFLILLFVLYKFL) form a helical membrane-spanning segment.

Belongs to the ATPase B chain family. F-type ATPases have 2 components, F(1) - the catalytic core - and F(0) - the membrane proton channel. F(1) has five subunits: alpha(3), beta(3), gamma(1), delta(1), epsilon(1). F(0) has three main subunits: a(1), b(2) and c(10-14). The alpha and beta chains form an alternating ring which encloses part of the gamma chain. F(1) is attached to F(0) by a central stalk formed by the gamma and epsilon chains, while a peripheral stalk is formed by the delta and b chains.

It localises to the cell inner membrane. In terms of biological role, f(1)F(0) ATP synthase produces ATP from ADP in the presence of a proton or sodium gradient. F-type ATPases consist of two structural domains, F(1) containing the extramembraneous catalytic core and F(0) containing the membrane proton channel, linked together by a central stalk and a peripheral stalk. During catalysis, ATP synthesis in the catalytic domain of F(1) is coupled via a rotary mechanism of the central stalk subunits to proton translocation. Functionally, component of the F(0) channel, it forms part of the peripheral stalk, linking F(1) to F(0). The polypeptide is ATP synthase subunit b (Pseudothermotoga lettingae (strain ATCC BAA-301 / DSM 14385 / NBRC 107922 / TMO) (Thermotoga lettingae)).